Here is a 149-residue protein sequence, read N- to C-terminus: Transthyretin (149 aa).

A signal peptide spans 1–22; it reads MAFHSLLLLCLAGLAFVSETAA. Cys32 is modified (sulfocysteine). Residue Lys37 participates in L-thyroxine binding. A 4-carboxyglutamate modification is found at Glu64. L-thyroxine is bound by residues Glu76 and Ser139.

The protein belongs to the transthyretin family. Homotetramer. Dimer of dimers. In the homotetramer, subunits assemble around a central channel that can accommodate two ligand molecules. Interacts with RBP4. Sulfonation of the reactive cysteine Cys-32 enhances the stability of the native conformation of TTR, avoiding misassembly of the protein leading to amyloid formation. Detected in liver.

It localises to the secreted. Functionally, thyroid hormone-binding protein. Probably transports thyroxine from the bloodstream to the brain. In Macropus giganteus (Eastern gray kangaroo), this protein is Transthyretin (TTR).